A 295-amino-acid chain; its full sequence is UDP-N-acetylenolpyruvoylglucosamine reductase (295 aa).

The region spanning 23–188 is the FAD-binding PCMH-type domain; sequence KVGGPADFLA…ISAKFALKPG (166 aa). Arg-167 is a catalytic residue. The Proton donor role is filled by Ser-217. Glu-287 is a catalytic residue.

The protein belongs to the MurB family. Requires FAD as cofactor.

The protein resides in the cytoplasm. The catalysed reaction is UDP-N-acetyl-alpha-D-muramate + NADP(+) = UDP-N-acetyl-3-O-(1-carboxyvinyl)-alpha-D-glucosamine + NADPH + H(+). It participates in cell wall biogenesis; peptidoglycan biosynthesis. Functionally, cell wall formation. This Streptococcus pyogenes serotype M49 (strain NZ131) protein is UDP-N-acetylenolpyruvoylglucosamine reductase.